A 1088-amino-acid polypeptide reads, in one-letter code: DNA-directed RNA polymerase subunit beta (1088 aa).

It belongs to the RNA polymerase beta chain family. As to quaternary structure, in plastids the minimal PEP RNA polymerase catalytic core is composed of four subunits: alpha, beta, beta', and beta''. When a (nuclear-encoded) sigma factor is associated with the core the holoenzyme is formed, which can initiate transcription.

The protein localises to the plastid. The protein resides in the chloroplast. The catalysed reaction is RNA(n) + a ribonucleoside 5'-triphosphate = RNA(n+1) + diphosphate. Functionally, DNA-dependent RNA polymerase catalyzes the transcription of DNA into RNA using the four ribonucleoside triphosphates as substrates. The sequence is that of DNA-directed RNA polymerase subunit beta from Chlorokybus atmophyticus (Soil alga).